A 66-amino-acid chain; its full sequence is Cold shock-like protein CspD (66 aa).

The 60-residue stretch at 4 to 63 (GKVKWFNGEKGFGFIEVEGGEDVFVHFSAIQGDGFKTLEEGQEVSFEIVDGNRGPQAANV) folds into the CSD domain.

As to quaternary structure, homodimer.

It localises to the cytoplasm. This Bacillus cereus protein is Cold shock-like protein CspD (cspD).